Reading from the N-terminus, the 487-residue chain is N-succinylglutamate 5-semialdehyde dehydrogenase (487 aa).

Residue 221–226 (GSSDTG) coordinates NAD(+). Active-site residues include E244 and C278.

It belongs to the aldehyde dehydrogenase family. AstD subfamily.

The enzyme catalyses N-succinyl-L-glutamate 5-semialdehyde + NAD(+) + H2O = N-succinyl-L-glutamate + NADH + 2 H(+). It participates in amino-acid degradation; L-arginine degradation via AST pathway; L-glutamate and succinate from L-arginine: step 4/5. Catalyzes the NAD-dependent reduction of succinylglutamate semialdehyde into succinylglutamate. The chain is N-succinylglutamate 5-semialdehyde dehydrogenase from Burkholderia pseudomallei (strain 1106a).